Consider the following 38-residue polypeptide: Phospholipase A2 1 (38 aa).

Ca(2+) contacts are provided by Tyr-28, Gly-30, and Gly-32.

It belongs to the phospholipase A2 family. Group I subfamily. Ca(2+) is required as a cofactor. Expressed by the venom gland.

Its subcellular location is the secreted. It catalyses the reaction a 1,2-diacyl-sn-glycero-3-phosphocholine + H2O = a 1-acyl-sn-glycero-3-phosphocholine + a fatty acid + H(+). In terms of biological role, snake venom phospholipase A2 (PLA2) that inhibits neuromuscular transmission by blocking acetylcholine release from the nerve termini. PLA2 catalyzes the calcium-dependent hydrolysis of the 2-acyl groups in 3-sn-phosphoglycerides. This is Phospholipase A2 1 from Calliophis bivirgatus (Blue Malaysian coral snake).